The primary structure comprises 482 residues: tRNA sulfurtransferase (482 aa).

The THUMP domain occupies 61–165 (LAIRDALTRI…DDRLLLIKGR (105 aa)). ATP contacts are provided by residues 183–184 (LI), lysine 265, glycine 287, and glutamine 296. Cysteine 344 and cysteine 456 are disulfide-bonded. In terms of domain architecture, Rhodanese spans 404-482 (FGPNDVILDI…GFNNVKVYRP (79 aa)). Cysteine 456 serves as the catalytic Cysteine persulfide intermediate.

It belongs to the ThiI family.

The protein localises to the cytoplasm. The enzyme catalyses [ThiI sulfur-carrier protein]-S-sulfanyl-L-cysteine + a uridine in tRNA + 2 reduced [2Fe-2S]-[ferredoxin] + ATP + H(+) = [ThiI sulfur-carrier protein]-L-cysteine + a 4-thiouridine in tRNA + 2 oxidized [2Fe-2S]-[ferredoxin] + AMP + diphosphate. The catalysed reaction is [ThiS sulfur-carrier protein]-C-terminal Gly-Gly-AMP + S-sulfanyl-L-cysteinyl-[cysteine desulfurase] + AH2 = [ThiS sulfur-carrier protein]-C-terminal-Gly-aminoethanethioate + L-cysteinyl-[cysteine desulfurase] + A + AMP + 2 H(+). It participates in cofactor biosynthesis; thiamine diphosphate biosynthesis. Functionally, catalyzes the ATP-dependent transfer of a sulfur to tRNA to produce 4-thiouridine in position 8 of tRNAs, which functions as a near-UV photosensor. Also catalyzes the transfer of sulfur to the sulfur carrier protein ThiS, forming ThiS-thiocarboxylate. This is a step in the synthesis of thiazole, in the thiamine biosynthesis pathway. The sulfur is donated as persulfide by IscS. This Escherichia coli O45:K1 (strain S88 / ExPEC) protein is tRNA sulfurtransferase.